We begin with the raw amino-acid sequence, 453 residues long: NADH-quinone oxidoreductase subunit D (453 aa).

Over residues 1–21 the composition is skewed to basic and acidic residues; it reads MKDTETRPGRHRAPEPAHPEQ. The disordered stretch occupies residues 1–30; sequence MKDTETRPGRHRAPEPAHPEQPDTTGDTVV.

The protein belongs to the complex I 49 kDa subunit family. In terms of assembly, NDH-1 is composed of 14 different subunits. Subunits NuoB, C, D, E, F, and G constitute the peripheral sector of the complex.

Its subcellular location is the cell membrane. It catalyses the reaction a quinone + NADH + 5 H(+)(in) = a quinol + NAD(+) + 4 H(+)(out). NDH-1 shuttles electrons from NADH, via FMN and iron-sulfur (Fe-S) centers, to quinones in the respiratory chain. The immediate electron acceptor for the enzyme in this species is believed to be a menaquinone. Couples the redox reaction to proton translocation (for every two electrons transferred, four hydrogen ions are translocated across the cytoplasmic membrane), and thus conserves the redox energy in a proton gradient. This Nocardia farcinica (strain IFM 10152) protein is NADH-quinone oxidoreductase subunit D.